The sequence spans 510 residues: NADH-quinone oxidoreductase subunit N (510 aa).

The next 14 membrane-spanning stretches (helical) occupy residues 14-34, 42-62, 84-104, 113-133, 135-155, 170-190, 208-228, 247-267, 286-306, 323-343, 346-366, 390-410, 426-446, and 466-486; these read LLPEFIILGFATFLSLLDLFA, VIGWLSFLGTVIAAIFVIINM, AFKLIFLAGTAFAILISLSYL, GEYYYLLLTGLLGAMVMASSA, LITLFVGLELLSLSSYVLVGL, VVSGSIATAVLLFGMSYVYGL, MAGYQFLVYTAFAFLAVGLAF, PTPVTVFLAVVSKAAGFALIF, FFFEEGSLYLGLMAAASMIIG, SGIAQAGYLLVPFVPPTSLFF, VIFYLFGYLLVSFGAFAVIMV, AIAMSIFLLSLAGIPITVGFF, WLAAIMIITSVISYYYYFGII, and IWTFILIMAIATVFFGAFPGL.

The protein belongs to the complex I subunit 2 family. In terms of assembly, NDH-1 is composed of 14 different subunits. Subunits NuoA, H, J, K, L, M, N constitute the membrane sector of the complex.

It localises to the cell membrane. The enzyme catalyses a quinone + NADH + 5 H(+)(in) = a quinol + NAD(+) + 4 H(+)(out). Functionally, NDH-1 shuttles electrons from NADH, via FMN and iron-sulfur (Fe-S) centers, to quinones in the respiratory chain. The immediate electron acceptor for the enzyme in this species is believed to be a menaquinone. Couples the redox reaction to proton translocation (for every two electrons transferred, four hydrogen ions are translocated across the cytoplasmic membrane), and thus conserves the redox energy in a proton gradient. In Brevibacillus brevis (strain 47 / JCM 6285 / NBRC 100599), this protein is NADH-quinone oxidoreductase subunit N.